A 357-amino-acid chain; its full sequence is MDIFKELILKHTDENVLISPVSILSTLSILNHGAAGSTAEQLSKYIENMNENTPDDKKDDNNDMDVDIPYCATLATANKIYGSDSIEFHASFLQKIKDDFQTVNFNNANQTKELINEWVKTMTNGKINSLLTSPLSINTRMIVISAVHFKAMWKYPFSKHLTYTDKFYISKNIVTSVDMMVGTENDLQYVHINELFGGFSIIDIPYEGNSSMVIILPDDIEGIYNIEKNITDEKFKKWCGMLSTKSIDLYMPKFKVEMTEPYNLVPILENLGLTNIFGYYADFSKMCNETITVEKFLHTTFIDVNEEYTEVSAVTGVFMTNFSMVYRMKVYINHPFIYMIKDNTGHTLFIGKYCYPQ.

This sequence belongs to the serpin family. Poxviruses subfamily.

Its subcellular location is the host cytoplasm. In terms of biological role, plays a role in mediating viral host range. May act to inhibit a caspase independent form of apoptosis to allow efficient virus replication in infected cells. The protein is Serine proteinase inhibitor 1 (OPG208) of Monkeypox virus.